The following is a 90-amino-acid chain: Small ribosomal subunit protein bS16 (90 aa).

The protein belongs to the bacterial ribosomal protein bS16 family.

This Lactobacillus gasseri (strain ATCC 33323 / DSM 20243 / BCRC 14619 / CIP 102991 / JCM 1131 / KCTC 3163 / NCIMB 11718 / NCTC 13722 / AM63) protein is Small ribosomal subunit protein bS16.